Here is a 255-residue protein sequence, read N- to C-terminus: EEF1A lysine methyltransferase 4 (255 aa).

Trp-26 and Tyr-30 together coordinate S-adenosyl-L-methionine. Residue Tyr-39 is modified to Phosphotyrosine. Residues Trp-41, Gly-66, 88–89, 113–114, and Lys-130 each bind S-adenosyl-L-methionine; these read DY and DV. The short motif at 129-134 is the Required for methyltransferase activity element; that stretch reads EKGTLD.

This sequence belongs to the methyltransferase superfamily.

It catalyses the reaction L-lysyl-[protein] + S-adenosyl-L-methionine = N(6)-methyl-L-lysyl-[protein] + S-adenosyl-L-homocysteine + H(+). It carries out the reaction N(6)-methyl-L-lysyl-[protein] + S-adenosyl-L-methionine = N(6),N(6)-dimethyl-L-lysyl-[protein] + S-adenosyl-L-homocysteine + H(+). The catalysed reaction is N(6),N(6)-dimethyl-L-lysyl-[protein] + S-adenosyl-L-methionine = N(6),N(6),N(6)-trimethyl-L-lysyl-[protein] + S-adenosyl-L-homocysteine + H(+). Its function is as follows. Protein-lysine methyltransferase that efficiently catalyzes three successive methylations on 'Lys-36' in eukaryotic translation elongation factor 1 alpha (EEF1A1 or EEF1A2). This chain is EEF1A lysine methyltransferase 4, found in Mus musculus (Mouse).